The primary structure comprises 282 residues: MEMO1 family protein Msed_2139 (282 aa).

Belongs to the MEMO1 family.

This Metallosphaera sedula (strain ATCC 51363 / DSM 5348 / JCM 9185 / NBRC 15509 / TH2) protein is MEMO1 family protein Msed_2139.